The following is a 578-amino-acid chain: XK-related protein 6 (578 aa).

Helical transmembrane passes span 86 to 106 (WIVL…WLAV), 114 to 134 (FLWS…VQIL), 253 to 273 (WLQC…LASY), 307 to 327 (VLSL…FVVL), 348 to 368 (WEEV…WFNV), 377 to 397 (MVAY…LWYA), and 410 to 430 (LALC…VLYY).

It belongs to the XK family.

The protein localises to the cell membrane. In Tetraodon nigroviridis (Spotted green pufferfish), this protein is XK-related protein 6 (xkr6).